Consider the following 463-residue polypeptide: Ribosomal protein uS12 methylthiotransferase RimO (463 aa).

Residues 11–126 enclose the MTTase N-terminal domain; the sequence is PKIGFVSLGC…VMEVVHTHCP (116 aa). Residues cysteine 20, cysteine 56, cysteine 85, cysteine 161, cysteine 165, and cysteine 168 each contribute to the [4Fe-4S] cluster site. The region spanning 147–388 is the Radical SAM core domain; the sequence is LTPRHYAYLK…MAVAEEVSTA (242 aa). Residues 391-463 enclose the TRAM domain; the sequence is QRRVGQTMQV…QGHDLVGVPV (73 aa).

The protein belongs to the methylthiotransferase family. RimO subfamily. [4Fe-4S] cluster serves as cofactor.

The protein resides in the cytoplasm. The enzyme catalyses L-aspartate(89)-[ribosomal protein uS12]-hydrogen + (sulfur carrier)-SH + AH2 + 2 S-adenosyl-L-methionine = 3-methylsulfanyl-L-aspartate(89)-[ribosomal protein uS12]-hydrogen + (sulfur carrier)-H + 5'-deoxyadenosine + L-methionine + A + S-adenosyl-L-homocysteine + 2 H(+). Catalyzes the methylthiolation of an aspartic acid residue of ribosomal protein uS12. The sequence is that of Ribosomal protein uS12 methylthiotransferase RimO from Acidovorax sp. (strain JS42).